The sequence spans 149 residues: Myoglobin (149 aa).

Ala-2 is modified (N-acetylalanine). The 142-residue stretch at 2 to 143 (ABWDKVNSVW…ICSDIEKEYK (142 aa)) folds into the Globin domain. His-89 contacts heme b.

It belongs to the globin family. Monomeric.

Its subcellular location is the cytoplasm. The protein localises to the sarcoplasm. The enzyme catalyses Fe(III)-heme b-[protein] + nitric oxide + H2O = Fe(II)-heme b-[protein] + nitrite + 2 H(+). The catalysed reaction is H2O2 + AH2 = A + 2 H2O. Its function is as follows. Monomeric heme protein which primary function is to store oxygen and facilitate its diffusion within muscle tissues. Reversibly binds oxygen through a pentacoordinated heme iron and enables its timely and efficient release as needed during periods of heightened demand. Depending on the oxidative conditions of tissues and cells, and in addition to its ability to bind oxygen, it also has a nitrite reductase activity whereby it regulates the production of bioactive nitric oxide. Under stress conditions, like hypoxia and anoxia, it also protects cells against reactive oxygen species thanks to its pseudoperoxidase activity. This Hemitriakis japanica (Japanese topeshark) protein is Myoglobin (mb).